Reading from the N-terminus, the 217-residue chain is Glycosylphosphatidylinositol anchor biosynthesis protein 11 (217 aa).

2 helical membrane-spanning segments follow: residues T45–N65 and N68–F88. The N-linked (GlcNAc...) asparagine glycan is linked to N102. 4 helical membrane-spanning segments follow: residues A107–F127, L134–Y154, Y169–D189, and I197–L217.

Belongs to the PIGF family.

The protein localises to the endoplasmic reticulum membrane. The protein operates within glycolipid biosynthesis; glycosylphosphatidylinositol-anchor biosynthesis. In terms of biological role, acts in the GPI biosynthetic pathway between GlcNAc-PI synthesis and GPI transfer to protein. This Candida glabrata (strain ATCC 2001 / BCRC 20586 / JCM 3761 / NBRC 0622 / NRRL Y-65 / CBS 138) (Yeast) protein is Glycosylphosphatidylinositol anchor biosynthesis protein 11 (GPI11).